A 513-amino-acid polypeptide reads, in one-letter code: Lysine--tRNA ligase (513 aa).

Residues glutamate 423 and glutamate 430 each coordinate Mg(2+).

This sequence belongs to the class-II aminoacyl-tRNA synthetase family. As to quaternary structure, homodimer. Mg(2+) is required as a cofactor.

The protein resides in the cytoplasm. It catalyses the reaction tRNA(Lys) + L-lysine + ATP = L-lysyl-tRNA(Lys) + AMP + diphosphate. The polypeptide is Lysine--tRNA ligase (Anaeromyxobacter dehalogenans (strain 2CP-1 / ATCC BAA-258)).